A 1199-amino-acid chain; its full sequence is DNA-directed RNA polymerase subunit beta' (1199 aa).

The Zn(2+) site is built by Cys-60, Cys-62, Cys-75, and Cys-78. Mg(2+) is bound by residues Asp-449, Asp-451, and Asp-453. 4 residues coordinate Zn(2+): Cys-818, Cys-892, Cys-899, and Cys-902.

The protein belongs to the RNA polymerase beta' chain family. The RNAP catalytic core consists of 2 alpha, 1 beta, 1 beta' and 1 omega subunit. When a sigma factor is associated with the core the holoenzyme is formed, which can initiate transcription. It depends on Mg(2+) as a cofactor. Requires Zn(2+) as cofactor.

It catalyses the reaction RNA(n) + a ribonucleoside 5'-triphosphate = RNA(n+1) + diphosphate. Its function is as follows. DNA-dependent RNA polymerase catalyzes the transcription of DNA into RNA using the four ribonucleoside triphosphates as substrates. This Bacillus licheniformis (strain ATCC 14580 / DSM 13 / JCM 2505 / CCUG 7422 / NBRC 12200 / NCIMB 9375 / NCTC 10341 / NRRL NRS-1264 / Gibson 46) protein is DNA-directed RNA polymerase subunit beta'.